The sequence spans 320 residues: Lipoyl synthase (320 aa).

Residues Cys67, Cys72, Cys78, Cys93, Cys97, Cys100, and Ser307 each contribute to the [4Fe-4S] cluster site. In terms of domain architecture, Radical SAM core spans 79–296 (FNHGTATFMI…RDKANEMGFE (218 aa)).

This sequence belongs to the radical SAM superfamily. Lipoyl synthase family. Requires [4Fe-4S] cluster as cofactor.

The protein resides in the cytoplasm. The enzyme catalyses [[Fe-S] cluster scaffold protein carrying a second [4Fe-4S](2+) cluster] + N(6)-octanoyl-L-lysyl-[protein] + 2 oxidized [2Fe-2S]-[ferredoxin] + 2 S-adenosyl-L-methionine + 4 H(+) = [[Fe-S] cluster scaffold protein] + N(6)-[(R)-dihydrolipoyl]-L-lysyl-[protein] + 4 Fe(3+) + 2 hydrogen sulfide + 2 5'-deoxyadenosine + 2 L-methionine + 2 reduced [2Fe-2S]-[ferredoxin]. It functions in the pathway protein modification; protein lipoylation via endogenous pathway; protein N(6)-(lipoyl)lysine from octanoyl-[acyl-carrier-protein]: step 2/2. In terms of biological role, catalyzes the radical-mediated insertion of two sulfur atoms into the C-6 and C-8 positions of the octanoyl moiety bound to the lipoyl domains of lipoate-dependent enzymes, thereby converting the octanoylated domains into lipoylated derivatives. The chain is Lipoyl synthase from Haemophilus influenzae (strain 86-028NP).